The following is a 335-amino-acid chain: Holliday junction branch migration complex subunit RuvB (335 aa).

The interval 4–184 (VDRIVSANAK…FGIVQRLEFY (181 aa)) is large ATPase domain (RuvB-L). Residues isoleucine 23, arginine 24, glycine 65, lysine 68, threonine 69, threonine 70, 131 to 133 (EDY), arginine 174, tyrosine 184, and arginine 221 contribute to the ATP site. Threonine 69 contributes to the Mg(2+) binding site. Residues 185 to 255 (SVEDLASIVT…IAQEALKMLD (71 aa)) form a small ATPAse domain (RuvB-S) region. The head domain (RuvB-H) stretch occupies residues 258–335 (LAGFDFMDRK…RHFGLEQIEK (78 aa)). Residues arginine 294, arginine 313, and arginine 318 each contribute to the DNA site.

Belongs to the RuvB family. As to quaternary structure, homohexamer. Forms an RuvA(8)-RuvB(12)-Holliday junction (HJ) complex. HJ DNA is sandwiched between 2 RuvA tetramers; dsDNA enters through RuvA and exits via RuvB. An RuvB hexamer assembles on each DNA strand where it exits the tetramer. Each RuvB hexamer is contacted by two RuvA subunits (via domain III) on 2 adjacent RuvB subunits; this complex drives branch migration. In the full resolvosome a probable DNA-RuvA(4)-RuvB(12)-RuvC(2) complex forms which resolves the HJ.

Its subcellular location is the cytoplasm. It carries out the reaction ATP + H2O = ADP + phosphate + H(+). Its function is as follows. The RuvA-RuvB-RuvC complex processes Holliday junction (HJ) DNA during genetic recombination and DNA repair, while the RuvA-RuvB complex plays an important role in the rescue of blocked DNA replication forks via replication fork reversal (RFR). RuvA specifically binds to HJ cruciform DNA, conferring on it an open structure. The RuvB hexamer acts as an ATP-dependent pump, pulling dsDNA into and through the RuvAB complex. RuvB forms 2 homohexamers on either side of HJ DNA bound by 1 or 2 RuvA tetramers; 4 subunits per hexamer contact DNA at a time. Coordinated motions by a converter formed by DNA-disengaged RuvB subunits stimulates ATP hydrolysis and nucleotide exchange. Immobilization of the converter enables RuvB to convert the ATP-contained energy into a lever motion, pulling 2 nucleotides of DNA out of the RuvA tetramer per ATP hydrolyzed, thus driving DNA branch migration. The RuvB motors rotate together with the DNA substrate, which together with the progressing nucleotide cycle form the mechanistic basis for DNA recombination by continuous HJ branch migration. Branch migration allows RuvC to scan DNA until it finds its consensus sequence, where it cleaves and resolves cruciform DNA. This Histophilus somni (strain 129Pt) (Haemophilus somnus) protein is Holliday junction branch migration complex subunit RuvB.